A 217-amino-acid polypeptide reads, in one-letter code: Adapter protein MecA (217 aa).

Belongs to the MecA family. Homodimer.

Its function is as follows. Enables the recognition and targeting of unfolded and aggregated proteins to the ClpC protease or to other proteins involved in proteolysis. Acts negatively in the development of competence by binding ComK and recruiting it to the ClpCP protease. When overexpressed, inhibits sporulation. Also involved in Spx degradation by ClpC. The sequence is that of Adapter protein MecA from Alkalihalophilus pseudofirmus (strain ATCC BAA-2126 / JCM 17055 / OF4) (Bacillus pseudofirmus).